The chain runs to 689 residues: Glycine--tRNA ligase beta subunit (689 aa).

Belongs to the class-II aminoacyl-tRNA synthetase family. Tetramer of two alpha and two beta subunits.

Its subcellular location is the cytoplasm. The catalysed reaction is tRNA(Gly) + glycine + ATP = glycyl-tRNA(Gly) + AMP + diphosphate. The protein is Glycine--tRNA ligase beta subunit of Edwardsiella ictaluri (strain 93-146).